Reading from the N-terminus, the 213-residue chain is Nicotinate-nucleotide adenylyltransferase (213 aa).

This sequence belongs to the NadD family.

The catalysed reaction is nicotinate beta-D-ribonucleotide + ATP + H(+) = deamido-NAD(+) + diphosphate. Its pathway is cofactor biosynthesis; NAD(+) biosynthesis; deamido-NAD(+) from nicotinate D-ribonucleotide: step 1/1. Catalyzes the reversible adenylation of nicotinate mononucleotide (NaMN) to nicotinic acid adenine dinucleotide (NaAD). The sequence is that of Nicotinate-nucleotide adenylyltransferase from Salmonella typhimurium (strain LT2 / SGSC1412 / ATCC 700720).